Consider the following 131-residue polypeptide: Small ribosomal subunit protein bS6 (131 aa).

Residues 98–131 form a disordered region; the sequence is EASPMVKAKDERRERRDDFANETADDADAGDSEE. Over residues 104 to 116 the composition is skewed to basic and acidic residues; that stretch reads KAKDERRERRDDF. The segment covering 120-131 has biased composition (acidic residues); the sequence is TADDADAGDSEE.

This sequence belongs to the bacterial ribosomal protein bS6 family.

Its function is as follows. Binds together with bS18 to 16S ribosomal RNA. The polypeptide is Small ribosomal subunit protein bS6 (Citrobacter koseri (strain ATCC BAA-895 / CDC 4225-83 / SGSC4696)).